A 595-amino-acid polypeptide reads, in one-letter code: MKNIRNFSIIAHIDHGKSTIADRFIQFCGGLSDREMSAQVLDSMDIEKERGITIKSQSVTLDYQARNNETYQLNFIDTPGHVDFSYEVSRSLSACEGALLIVDASQGVEAQTIANCYTALDQGLEVVPVLNKIDLPAADPDRVVDEIEDVIGVEAHDAVYASAKSGMGIEDILEQIVEKIPAPKGNIDSPIKALIIDSWFDNYLGVVSLIRVIDGEIRTKTKIKIFSNGKEHLVDEVGVFRPKRKKTNSLKAGEVGFLIASIKNIDGAPVGDTITGAKNSASKPLEGFKPVQPRVFSGIFPISGEDYEKFRDALAKLRLNDAALQYEPENSDALGFGFRIGFLGLLHMEIVQERLEREYNLNLITTAPTVIYEILDTKGVIYRIDSPSKIPINQSIAEFREPIITANILVTDEYVGVIISLCVEKRGVQKNITYMGGQVSLVYELPLNEVVFDFFDRLKSISRGFASMDYRFERYQKSDLIRLDIMINQEPVDVLALIIHRNDSVHKGRELVEKMKKLIPRQMFDVTIQACIGSKIISRSNVKALRKNVTAKCYGGDISRKRKLLDKQKKGKKRMRSVGKVNIPQEVFLAVLHID.

The 183-residue stretch at 2–184 (KNIRNFSIIA…QIVEKIPAPK (183 aa)) folds into the tr-type G domain. Residues 14–19 (DHGKST) and 131–134 (NKID) each bind GTP.

Belongs to the TRAFAC class translation factor GTPase superfamily. Classic translation factor GTPase family. LepA subfamily.

The protein localises to the cell inner membrane. The enzyme catalyses GTP + H2O = GDP + phosphate + H(+). Required for accurate and efficient protein synthesis under certain stress conditions. May act as a fidelity factor of the translation reaction, by catalyzing a one-codon backward translocation of tRNAs on improperly translocated ribosomes. Back-translocation proceeds from a post-translocation (POST) complex to a pre-translocation (PRE) complex, thus giving elongation factor G a second chance to translocate the tRNAs correctly. Binds to ribosomes in a GTP-dependent manner. In Ruthia magnifica subsp. Calyptogena magnifica, this protein is Elongation factor 4.